A 669-amino-acid chain; its full sequence is tRNA 5-methylaminomethyl-2-thiouridine biosynthesis bifunctional protein MnmC (669 aa).

Residues 1 to 246 (MIKNANIHFN…KRSMLIGTLK (246 aa)) form a tRNA (mnm(5)s(2)U34)-methyltransferase region. Positions 271 to 669 (IGGGIASSCI…IVRDLIRNKI (399 aa)) are FAD-dependent cmnm(5)s(2)U34 oxidoreductase.

In the N-terminal section; belongs to the methyltransferase superfamily. tRNA (mnm(5)s(2)U34)-methyltransferase family. This sequence in the C-terminal section; belongs to the DAO family. FAD is required as a cofactor.

It is found in the cytoplasm. The enzyme catalyses 5-aminomethyl-2-thiouridine(34) in tRNA + S-adenosyl-L-methionine = 5-methylaminomethyl-2-thiouridine(34) in tRNA + S-adenosyl-L-homocysteine + H(+). Functionally, catalyzes the last two steps in the biosynthesis of 5-methylaminomethyl-2-thiouridine (mnm(5)s(2)U) at the wobble position (U34) in tRNA. Catalyzes the FAD-dependent demodification of cmnm(5)s(2)U34 to nm(5)s(2)U34, followed by the transfer of a methyl group from S-adenosyl-L-methionine to nm(5)s(2)U34, to form mnm(5)s(2)U34. In Pseudoalteromonas translucida (strain TAC 125), this protein is tRNA 5-methylaminomethyl-2-thiouridine biosynthesis bifunctional protein MnmC.